Consider the following 136-residue polypeptide: NADPH-dependent 7-cyano-7-deazaguanine reductase (136 aa).

Cysteine 53 functions as the Thioimide intermediate in the catalytic mechanism. Aspartate 60 serves as the catalytic Proton donor. Substrate-binding positions include valine 75–leucine 77 and histidine 94–glutamate 95.

Belongs to the GTP cyclohydrolase I family. QueF type 1 subfamily.

Its subcellular location is the cytoplasm. The enzyme catalyses 7-aminomethyl-7-carbaguanine + 2 NADP(+) = 7-cyano-7-deazaguanine + 2 NADPH + 3 H(+). Its pathway is tRNA modification; tRNA-queuosine biosynthesis. Its function is as follows. Catalyzes the NADPH-dependent reduction of 7-cyano-7-deazaguanine (preQ0) to 7-aminomethyl-7-deazaguanine (preQ1). The polypeptide is NADPH-dependent 7-cyano-7-deazaguanine reductase (Trichormus variabilis (strain ATCC 29413 / PCC 7937) (Anabaena variabilis)).